Reading from the N-terminus, the 60-residue chain is Waprin-Lio1 (60 aa).

Positions 1 to 8 (MLLGTTSA) are cleaved as a signal peptide. The WAP domain occupies 9–59 (QVVRPGSCPNVDVPIPPLGLCRTTCQTDANCQEGRKCCKNGCGFMTCETAR). 4 disulfide bridges follow: Cys-16–Cys-46, Cys-29–Cys-50, Cys-33–Cys-45, and Cys-39–Cys-55.

Belongs to the venom waprin family. Expressed by the venom gland.

Its subcellular location is the secreted. Damages membranes of susceptible bacteria. Has no hemolytic activity. Not toxic to mice. Does not inhibit the proteinases elastase and cathepsin G. In Erythrolamprus poecilogyrus (Water snake), this protein is Waprin-Lio1.